Consider the following 251-residue polypeptide: Ell1-associated factor 1 (251 aa).

2 disordered regions span residues 110 to 187 (SKTV…DMEV) and 201 to 251 (FDQE…EDED). Residues 112–123 (TVPSNAITQSDN) are compositionally biased toward polar residues. A compositionally biased stretch (low complexity) spans 124–135 (SQISESKSTSQS). The span at 143–157 (RRKEKELEASKDGKI) shows a compositional bias: basic and acidic residues. 2 stretches are compositionally biased toward polar residues: residues 204-220 (EFNS…TASK) and 236-251 (SSAQ…EDED). Ser247 carries the phosphoserine modification.

The protein belongs to the EAF family. As to quaternary structure, forms a stable heterodimer with ell1. Ell1-eaf1 complex interacts with RNA polymerase II.

It localises to the nucleus. Its function is as follows. Activates transcription elongation by RNA polymerase II and pyrophosphorolysis as a complex with ell1. Acts as a transcriptional transactivator of ell1 elongation activities. The sequence is that of Ell1-associated factor 1 (eaf1) from Schizosaccharomyces pombe (strain 972 / ATCC 24843) (Fission yeast).